The primary structure comprises 171 residues: Adenine phosphoribosyltransferase (171 aa).

This sequence belongs to the purine/pyrimidine phosphoribosyltransferase family. In terms of assembly, homodimer.

The protein resides in the cytoplasm. The enzyme catalyses AMP + diphosphate = 5-phospho-alpha-D-ribose 1-diphosphate + adenine. It functions in the pathway purine metabolism; AMP biosynthesis via salvage pathway; AMP from adenine: step 1/1. Catalyzes a salvage reaction resulting in the formation of AMP, that is energically less costly than de novo synthesis. This is Adenine phosphoribosyltransferase from Trichlorobacter lovleyi (strain ATCC BAA-1151 / DSM 17278 / SZ) (Geobacter lovleyi).